A 79-amino-acid chain; its full sequence is Conotoxin ArMSGL-021 (79 aa).

Residues 1 to 20 (MSRLGIMVLTLLLLVFIVTS) form the signal peptide. A propeptide spanning residues 21–44 (HQDAGEKQATHRGAINFRWRRSLI) is cleaved from the precursor. Disulfide bonds link cysteine 52/cysteine 64, cysteine 56/cysteine 73, and cysteine 63/cysteine 77. Leucine 78 is modified (leucine amide).

Belongs to the conotoxin O3 superfamily. As to expression, expressed by the venom duct.

It is found in the secreted. This chain is Conotoxin ArMSGL-021, found in Conus arenatus (Sand-dusted cone).